The sequence spans 222 residues: Elongation factor 1-beta' (222 aa).

Positions Ser-71 to Glu-113 are disordered. The segment covering Thr-78–Ala-89 has biased composition (low complexity). The segment covering Asp-92 to Glu-111 has biased composition (acidic residues).

Belongs to the EF-1-beta/EF-1-delta family. In terms of assembly, EF-1 is composed of 4 subunits: alpha, beta, beta' and gamma. Phosphorylated.

In terms of biological role, EF-1-beta and EF-1-beta' stimulate the exchange of GDP bound to EF-1-alpha to GTP. The sequence is that of Elongation factor 1-beta' from Bombyx mori (Silk moth).